Reading from the N-terminus, the 236-residue chain is ATP synthase subunit a (236 aa).

5 consecutive transmembrane segments (helical) span residues 17–37 (WTNL…LFGL), 76–96 (SFFV…GLII), 113–133 (PVVT…AGVA), 170–190 (IFGN…MAFS), and 196–216 (MIVS…IGAI).

It belongs to the ATPase A chain family. As to quaternary structure, F-type ATPases have 2 components, CF(1) - the catalytic core - and CF(0) - the membrane proton channel. CF(1) has five subunits: alpha(3), beta(3), gamma(1), delta(1), epsilon(1). CF(0) has three main subunits: a(1), b(2) and c(9-12). The alpha and beta chains form an alternating ring which encloses part of the gamma chain. CF(1) is attached to CF(0) by a central stalk formed by the gamma and epsilon chains, while a peripheral stalk is formed by the delta and b chains.

It is found in the cell membrane. Key component of the proton channel; it plays a direct role in the translocation of protons across the membrane. The sequence is that of ATP synthase subunit a from Limosilactobacillus fermentum (strain NBRC 3956 / LMG 18251) (Lactobacillus fermentum).